The chain runs to 449 residues: Glucose-6-phosphate isomerase (449 aa).

The Proton donor role is filled by E290. Active-site residues include H311 and K425.

Belongs to the GPI family.

Its subcellular location is the cytoplasm. It catalyses the reaction alpha-D-glucose 6-phosphate = beta-D-fructose 6-phosphate. The protein operates within carbohydrate biosynthesis; gluconeogenesis. Its pathway is carbohydrate degradation; glycolysis; D-glyceraldehyde 3-phosphate and glycerone phosphate from D-glucose: step 2/4. Its function is as follows. Catalyzes the reversible isomerization of glucose-6-phosphate to fructose-6-phosphate. The protein is Glucose-6-phosphate isomerase of Clostridium tetani (strain Massachusetts / E88).